A 153-amino-acid chain; its full sequence is MPTLTDSPPTTVLTVTELQQLLPHRYPFLLVDRIIDYVPEKYAVGLKNVTINEPFFQGHFPGRPIMPGVLIVEALAQVGGVVLMQMNWAKDKLSVFAGIDKVRFRRPVVPGDQLILRAELLVVKQQRIGKMQGRAEVNGQLVCEGEMMFSLVD.

The active site involves His-59.

Belongs to the thioester dehydratase family. FabZ subfamily.

Its subcellular location is the cytoplasm. It catalyses the reaction a (3R)-hydroxyacyl-[ACP] = a (2E)-enoyl-[ACP] + H2O. Functionally, involved in unsaturated fatty acids biosynthesis. Catalyzes the dehydration of short chain beta-hydroxyacyl-ACPs and long chain saturated and unsaturated beta-hydroxyacyl-ACPs. The protein is 3-hydroxyacyl-[acyl-carrier-protein] dehydratase FabZ of Thermosynechococcus vestitus (strain NIES-2133 / IAM M-273 / BP-1).